A 159-amino-acid chain; its full sequence is Membrane protein FAM174B (159 aa).

The first 27 residues, 1–27, serve as a signal peptide directing secretion; the sequence is MRAALPPARLLPLLLLLALLGAPAARA. The tract at residues 28–73 is disordered; the sequence is SRAQSAAPPQPGAERQPRPPPGPGPGNATGTGSGEAAGGGGSSNSS. Residues 28 to 90 lie on the Extracellular side of the membrane; that stretch reads SRAQSAAPPQ…ISSLLRDLHT (63 aa). The span at 52 to 69 shows a compositional bias: gly residues; that stretch reads PGNATGTGSGEAAGGGGS. Asn54 is a glycosylation site (N-linked (GlcNAc...) asparagine). The chain crosses the membrane as a helical span at residues 91–111; it reads LKAAVIVACAFTAFLIACLLL. Topologically, residues 112 to 159 are cytoplasmic; sequence RVFRSGKRLKKTRKYDIITTPAERVEMAPLNEEDDEDEDSTVFDIKYR.

This sequence belongs to the FAM174 family.

The protein resides in the cell membrane. It localises to the golgi apparatus. Its function is as follows. Essential for Golgi structural integrity. This Bos taurus (Bovine) protein is Membrane protein FAM174B (FAM174B).